We begin with the raw amino-acid sequence, 291 residues long: Lipoyl synthase, mitochondrial (291 aa).

Cys-45, Cys-50, Cys-56, Cys-71, Cys-75, Cys-78, and Ser-283 together coordinate [4Fe-4S] cluster. The 216-residue stretch at Trp-57 to Arg-272 folds into the Radical SAM core domain.

Belongs to the radical SAM superfamily. Lipoyl synthase family. It depends on [4Fe-4S] cluster as a cofactor.

Its subcellular location is the mitochondrion. The enzyme catalyses [[Fe-S] cluster scaffold protein carrying a second [4Fe-4S](2+) cluster] + N(6)-octanoyl-L-lysyl-[protein] + 2 oxidized [2Fe-2S]-[ferredoxin] + 2 S-adenosyl-L-methionine + 4 H(+) = [[Fe-S] cluster scaffold protein] + N(6)-[(R)-dihydrolipoyl]-L-lysyl-[protein] + 4 Fe(3+) + 2 hydrogen sulfide + 2 5'-deoxyadenosine + 2 L-methionine + 2 reduced [2Fe-2S]-[ferredoxin]. It participates in protein modification; protein lipoylation via endogenous pathway; protein N(6)-(lipoyl)lysine from octanoyl-[acyl-carrier-protein]: step 2/2. In terms of biological role, catalyzes the radical-mediated insertion of two sulfur atoms into the C-6 and C-8 positions of the octanoyl moiety bound to the lipoyl domains of lipoate-dependent enzymes, thereby converting the octanoylated domains into lipoylated derivatives. This is Lipoyl synthase, mitochondrial from Nematostella vectensis (Starlet sea anemone).